Consider the following 381-residue polypeptide: Heterogeneous nuclear rnp K-like protein 2 (381 aa).

A disordered region spans residues 1-34 (MSQFFEAATPVAIPTNNTNGGSSDAGSAATGGAP). The segment covering 15 to 33 (TNNTNGGSSDAGSAATGGA) has biased composition (low complexity). KH domains follow at residues 43 to 107 (TINH…IGDI), 156 to 221 (IGYV…LIEI), and 258 to 326 (NTRI…ESML). The interval 344–381 (LEAAEGDATVVTERSDSASFLEEKEEPQKNHDNKEEQS) is disordered. A phosphoserine mark is found at serine 358, serine 360, and serine 362. The segment covering 369–381 (EPQKNHDNKEEQS) has biased composition (basic and acidic residues).

It belongs to the HEK2 family. As to quaternary structure, binds RNA. Post-translationally, phosphorylated by the plasma membrane-Anchored casein kinase YCK1. Phosphorylation at its C-terminus reduces its RNA-binding capacity.

The protein resides in the cytoplasm. It localises to the P-body. The protein localises to the nucleus. It is found in the chromosome. Its subcellular location is the telomere. In terms of biological role, RNA-binding protein involved in the correct localization of transcripts in the cell. RNA localization is a widespread mechanism for achieving localized protein synthesis. Required for the asymmetric localization to the daughter cell nucleus of the ASH1 transcript, coding for a specific repressor of transcription. Overexpression inhibits translation of the ASH1 transcript. Involved in the stability of transcripts, like the MTL1 mRNA. Involved in structural and functional organization of telomeric chromatin and regulates silencing at the HMR locus. The sequence is that of Heterogeneous nuclear rnp K-like protein 2 (HEK2) from Saccharomyces cerevisiae (strain JAY291) (Baker's yeast).